A 1647-amino-acid polypeptide reads, in one-letter code: MDVWESQHFSALLYLLQCIESNPSNPNVSSRLLIQCLESYSKDFLKFLALDPANANSRKKLESGEVELGGVINKVNEQFIQLSLTLSTQLNLDEIQCASLLQRGIEASQNLDRTPVQAALYFFFLAREQLLECLESLTRVVGLKDLESDISTALKSYLQSLCENGNNLVKTCIDTIPILDNKVSEILKSEAGGQILGVSEVVDFQEFIRLSHEAHVAELETISVILYQLAKVDLFQNSHFESLLVMLRKYDSPNKNAVLILPTLYAFIDKVLEVEYLPDQKVQLRSNSVEILQKIHQAIIQSPSQDWRSSQFKNILGIWWVTRLNATCKQIEKVPSFIDYETTIKNAANEIIQNGVFSDMITLLVYPFRQSETEGMEWAFAFKSRSRITVNWSLIRPFIASIIFSELRSFAQAFVSYMPDILKTLRLLEEDRYLTNTTYPTSIPGEQIEEYFPFEEFYYLLSSIYTYNVSWISDFWDDIESDMYGFLTWSMGSQIPGIITAFTLLLASLCKNTTSASKIYELFSEPIPEVGHLESLMITSPSWSYIFNVFRYYISHLKPVQTVVTSSGLARVHTDPSEIDTDSALILQAYILLFSSVVRQDAQIASTFCENQDLNPIATLFELLECRLPDSVRICIVRALESLAHLSTGSFNNALWTALDNWFVSSVLFDVDGGLAPMSIPAISKRSLTKPVTSCGPLLNNIRRLTVNLEMKISFVNLLTSLTRNKSELNVNLTFPENLGASYRTPGVQPYVDYVVETFVASSTQWRLMRDVGSIRLQYACLQYMLAVLDGLNIDLLLYSRILSSKVRDNLQNNNLHVYLTRHPAISLLEALYTESVYSGLFDLVEYGFDQLEDVSVPKTIVITVSASLCILRNVLSLQRVLFKNVVPYIAELGISKYILDLTISRRAYKEVFMTRISSIVHLALLVGSRHKCFLRSAIEILSYLVDAEGFMNKRNPDENKLLCSIIRTANESKRIIFGFIRTFESQFLTLLSTNDESSLILKLLLNNLKQSGGVYSLALLILGFDISSTNVITLRDQPGYVGSRVSLMNSLLDFIEGRTIVNGIWETPVIMVQALEIVAFLCSCPLTSEVTLSVIRARPGLLVKMVDGEPILTQQVIQNLGGFSSEEVSMVSRCIRSRTQIMNMLATEIHYAASVGQNKYLNEYVASLIRTNEKTHSTELSQKESGFKILEFMDILRIDPQSITFELPNIPGFNLNMFITRFDRGHSDFQFDTERVLKIYRLFFEAEMTSLGGSAEEKYSWLEQQNSKLKELAQRLNTFNAHVVLLQDIHGCLTAWARLTGLLVDDCNEVISDVHFDDFIWEVLRLVLPGVTVHNLGTQGTVSVTSSVIETILPHALRRIGALKPEELGKSTYFMEGIHDVIVGLLKGIQCQQSDESIRENLYGSLLSILTVFQKHTSANGGDKVDPVFKDAFQKLITPNLLTSQFFDVLTKDALYTNGSCWELSVIILNFLHHVSPDISTHLYKYYLRRNFVSSFIDAFSRAFSELLSSNKDVLEVLSGLEAGQCLLITFAQNKLTVHSVLTFDYIKLMVQMLLQLCKQGGIQYLKPPVQRLMIQLLQIFILVLMRVTLKEISNKDKLLLQSIFLLSRKLQDSVQTGADQALSPEMNTVKKYVETISRLLDLYRD.

It belongs to the NUP186/NUP192/NUP205 family.

The protein resides in the cytoplasm. It localises to the nucleus. Functions as a component of the nuclear pore complex (NPC). NPC components, collectively referred to as nucleoporins (NUPs), can play the role of both NPC structural components and of docking or interaction partners for transiently associated nuclear transport factors. Active directional transport is assured by both, a Phe-Gly (FG) repeat affinity gradient for these transport factors across the NPC and a transport cofactor concentration gradient across the nuclear envelope. This Schizosaccharomyces pombe (strain 972 / ATCC 24843) (Fission yeast) protein is Nucleoporin nup186 (nup186).